Consider the following 80-residue polypeptide: RNA-binding protein Hfq (80 aa).

Positions 10-70 (DIFLNNARKE…ISTVSPAKPI (61 aa)) constitute a Sm domain.

The protein belongs to the Hfq family. Homohexamer.

RNA chaperone that binds small regulatory RNA (sRNAs) and mRNAs to facilitate mRNA translational regulation in response to envelope stress, environmental stress and changes in metabolite concentrations. Also binds with high specificity to tRNAs. In Clostridium perfringens (strain SM101 / Type A), this protein is RNA-binding protein Hfq.